A 2699-amino-acid chain; its full sequence is UPF0648 protein C3H5.09c (2699 aa).

Residue Asn21 is glycosylated (N-linked (GlcNAc...) asparagine). Residues 24–44 traverse the membrane as a helical segment; the sequence is FVWVVIATGFLFHLVLFVLSY. N-linked (GlcNAc...) asparagine glycosylation is found at Asn288, Asn293, Asn334, Asn345, Asn433, Asn507, Asn551, Asn655, Asn760, Asn993, Asn1000, Asn1003, Asn1006, and Asn1009. The tract at residues 975 to 1021 is disordered; the sequence is KAKDPSPKSASESSSFYQNGSDIDDNDSNSSNTSNHTTENANAQQRK. Low complexity predominate over residues 981–995; it reads PKSASESSSFYQNGS. A coiled-coil region spans residues 1006 to 1033; that stretch reads NTSNHTTENANAQQRKLEDLNRSFEDFL. Residues 1010-1019 show a composition bias toward polar residues; the sequence is HTTENANAQQ. N-linked (GlcNAc...) asparagine glycosylation is found at Asn1026, Asn1039, Asn1046, Asn1236, Asn1255, Asn1344, Asn1527, Asn1595, Asn1791, Asn1916, Asn2032, Asn2048, Asn2256, Asn2285, Asn2388, Asn2407, Asn2417, Asn2508, and Asn2622. Residues 1758–1818 are a coiled coil; the sequence is QYELLQKRRK…TLSDHYRLLE (61 aa). The interval 2393–2447 is disordered; it reads FPHIYSRNHDKRKENGSQGEADNSNYSGSLMRRRTNDQEEDALATPSSSRRDSRS. Polar residues predominate over residues 2408–2420; sequence GSQGEADNSNYSG. 2 disordered regions span residues 2606 to 2632 and 2647 to 2676; these read AEEN…LNSP and ADIV…ARVD. The span at 2617-2632 shows a compositional bias: polar residues; it reads SAISRNHSTRSSLNSP.

The protein belongs to the UPF0648 family.

Its subcellular location is the membrane. This Schizosaccharomyces pombe (strain 972 / ATCC 24843) (Fission yeast) protein is UPF0648 protein C3H5.09c.